A 657-amino-acid chain; its full sequence is 1-deoxy-D-xylulose-5-phosphate synthase (657 aa).

Residues His-73 and 113-115 (SHA) each bind thiamine diphosphate. Mg(2+) is bound at residue Asp-145. Residues 146–147 (GA), Asn-175, Tyr-293, and Glu-375 each bind thiamine diphosphate. Position 175 (Asn-175) interacts with Mg(2+).

This sequence belongs to the transketolase family. DXPS subfamily. As to quaternary structure, homodimer. Requires Mg(2+) as cofactor. It depends on thiamine diphosphate as a cofactor.

The catalysed reaction is D-glyceraldehyde 3-phosphate + pyruvate + H(+) = 1-deoxy-D-xylulose 5-phosphate + CO2. It participates in metabolic intermediate biosynthesis; 1-deoxy-D-xylulose 5-phosphate biosynthesis; 1-deoxy-D-xylulose 5-phosphate from D-glyceraldehyde 3-phosphate and pyruvate: step 1/1. Catalyzes the acyloin condensation reaction between C atoms 2 and 3 of pyruvate and glyceraldehyde 3-phosphate to yield 1-deoxy-D-xylulose-5-phosphate (DXP). This Pseudarthrobacter chlorophenolicus (strain ATCC 700700 / DSM 12829 / CIP 107037 / JCM 12360 / KCTC 9906 / NCIMB 13794 / A6) (Arthrobacter chlorophenolicus) protein is 1-deoxy-D-xylulose-5-phosphate synthase.